The primary structure comprises 483 residues: Serine/threonine-protein kinase BSK4 (483 aa).

Gly-2 carries the N-myristoyl glycine lipid modification. The region spanning 56–322 is the Protein kinase domain; sequence ENVVSEHGET…DTEVLSHVLM (267 aa). Residues 62-70 and Lys-84 contribute to the ATP site; that span reads HGETAPNVV. The Proton acceptor role is filled by Asp-178.

The protein belongs to the protein kinase superfamily. Ser/Thr protein kinase family.

It is found in the cell membrane. The enzyme catalyses L-seryl-[protein] + ATP = O-phospho-L-seryl-[protein] + ADP + H(+). It carries out the reaction L-threonyl-[protein] + ATP = O-phospho-L-threonyl-[protein] + ADP + H(+). Functionally, probable serine/threonine kinase that acts as a positive regulator of brassinosteroid (BR) signaling downstream of the receptor kinase BRI1. Functions redundantly with BSK3, BSK6, BSK7 and BSK8. This chain is Serine/threonine-protein kinase BSK4, found in Arabidopsis thaliana (Mouse-ear cress).